Consider the following 670-residue polypeptide: MGEPAGVAGTMESPFSPGLFHRLDEDWDSALFAELGYFTDTDELQLEAANETYENNFDNLDFDLDLMPWESDIWDINNQICTVKDIKAEPQPLSPASSSYSVSSPRSVDSYSSTQHVPEELDLSSSSQMSPLSLYGENSNSLSSAEPLKEDKPVTGPRNKTENGLTPKKKIQVNSKPSIQPKPLLLPAAPKTQTNSSVPAKTIIIQTVPTLMPLAKQQPIISLQPAPTKGQTVLLSQPTVVQLQAPGVLPSAQPVLAVAGGVTQLPNHVVNVVPAPSANSPVNGKLSVTKPVLQSTMRNVGSDIAVLRRQQRMIKNRESACQSRKKKKEYMLGLEARLKAALSENEQLKKENGTLKRQLDEVVSENQRLKVPSPKRRVVCVMIVLAFIILNYGPMSMLEQDSRRMNPSVSPANQRRHLLGFSAKEAQDTSDGIIQKNSYRYDHSVSNDKALMVLTEEPLLYIPPPPCQPLINTTESLRLNHELRGWVHRHEVERTKSRRMTNNQQKTRILQGALEQGSNSQLMAVQYTETTSSISRNSGSELQVYYASPRSYQDFFEAIRRRGDTFYVVSFRRDHLLLPATTHNKTTRPKMSIVLPAININENVINGQDYEVMMQIDCQVMDTRILHIKSSSVPPYLRDQQRNQTNTFFGSPPAATEATHVVSTIPESLQ.

The segment at Met-1–Glu-150 is transcription activation. Residues Met-1–Arg-377 lie on the Cytoplasmic side of the membrane. Residue Lys-87 forms a Glycyl lysine isopeptide (Lys-Gly) (interchain with G-Cter in SUMO2) linkage. The tract at residues Gln-91–Pro-183 is disordered. Low complexity-rich tracts occupy residues Ser-94–Ser-113 and Leu-123–Leu-134. Lys-152 participates in a covalent cross-link: Glycyl lysine isopeptide (Lys-Gly) (interchain with G-Cter in ubiquitin). Residues Val-306 to Leu-369 enclose the bZIP domain. A basic motif region spans residues Arg-308–Lys-339. Residues Leu-348–Leu-355 form a leucine-zipper region. The helical; Signal-anchor for type II membrane protein transmembrane segment at Val-378–Leu-398 threads the bilayer. Residues Glu-399–Gln-670 lie on the Lumenal side of the membrane. Residues Gln-468–Pro-589 form an interaction with THBS4 region. N-linked (GlcNAc...) asparagine glycans are attached at residues Asn-472, Asn-584, and Asn-643.

It belongs to the bZIP family. ATF subfamily. Interacts with XBP1 isoform 2; the interaction occurs in a ER stress-dependent manner. Interacts with LACC1. As to quaternary structure, interacts with THBS4 (via EGF-like 3; calcium-binding domain) which facilitates its processing, activation and nuclear translocation. Interacts (via lumenal domain) with THBS1. In terms of assembly, homodimer and heterodimer with ATF6-beta. The dimer interacts with the nuclear transcription factor Y (NF-Y) trimer through direct binding to NF-Y subunit C (NF-YC). Also interacts with the transcription factors GTF2I, YY1 and SRF. Post-translationally, during unfolded protein response, a fragment of approximately 50 kDa containing the cytoplasmic transcription factor domain is released by proteolysis. The cleavage seems to be performed sequentially by site-1 (MBTPS1, S1P) and site-2 (MBTPS2, S2P) proteases. N-glycosylated; in its luminal domain. The glycosylation status may serve as a sensor for ER homeostasis, resulting in ATF6 activation to trigger the unfolded protein response (UPR). In terms of processing, ubiquitinated by RNF186 at Lys-152, which is required for pattern recognition receptor-induced unfolded protein response-associated outcomes. As to expression, ubiquitous.

The protein resides in the endoplasmic reticulum membrane. The protein localises to the golgi apparatus membrane. It is found in the nucleus. Its function is as follows. Precursor of the transcription factor form (Processed cyclic AMP-dependent transcription factor ATF-6 alpha), which is embedded in the endoplasmic reticulum membrane. Endoplasmic reticulum stress promotes processing of this form, releasing the transcription factor form that translocates into the nucleus, where it activates transcription of genes involved in the unfolded protein response (UPR). Transcription factor that initiates the unfolded protein response (UPR) during endoplasmic reticulum stress by activating transcription of genes involved in the UPR. Binds DNA on the 5'-CCAC[GA]-3'half of the ER stress response element (ERSE) (5'-CCAAT-N(9)-CCAC[GA]-3') and of ERSE II (5'-ATTGG-N-CCACG-3'). Binding to ERSE requires binding of NF-Y to ERSE. Could also be involved in activation of transcription by the serum response factor. May play a role in foveal development and cone function in the retina. In Homo sapiens (Human), this protein is Cyclic AMP-dependent transcription factor ATF-6 alpha (ATF6).